A 393-amino-acid chain; its full sequence is CCA-adding enzyme (393 aa).

ATP-binding residues include G27 and R30. Residues G27 and R30 each contribute to the CTP site. Mg(2+)-binding residues include D40 and D42. Positions 111, 154, 157, 160, and 163 each coordinate ATP. CTP-binding residues include R111, D154, R157, R160, and R163.

It belongs to the tRNA nucleotidyltransferase/poly(A) polymerase family. Bacterial CCA-adding enzyme type 3 subfamily. As to quaternary structure, homodimer. Mg(2+) serves as cofactor.

The enzyme catalyses a tRNA precursor + 2 CTP + ATP = a tRNA with a 3' CCA end + 3 diphosphate. It catalyses the reaction a tRNA with a 3' CCA end + 2 CTP + ATP = a tRNA with a 3' CCACCA end + 3 diphosphate. Its function is as follows. Catalyzes the addition and repair of the essential 3'-terminal CCA sequence in tRNAs without using a nucleic acid template. Adds these three nucleotides in the order of C, C, and A to the tRNA nucleotide-73, using CTP and ATP as substrates and producing inorganic pyrophosphate. tRNA 3'-terminal CCA addition is required both for tRNA processing and repair. Also involved in tRNA surveillance by mediating tandem CCA addition to generate a CCACCA at the 3' terminus of unstable tRNAs. While stable tRNAs receive only 3'-terminal CCA, unstable tRNAs are marked with CCACCA and rapidly degraded. The chain is CCA-adding enzyme from Listeria monocytogenes serovar 1/2a (strain ATCC BAA-679 / EGD-e).